Here is a 428-residue protein sequence, read N- to C-terminus: Adenylosuccinate synthetase (428 aa).

GTP is bound by residues 13–19 (GDEGKGK) and 41–43 (GHT). Aspartate 14 serves as the catalytic Proton acceptor. Mg(2+)-binding residues include aspartate 14 and glycine 41. IMP-binding positions include 14–17 (DEGK), 39–42 (NAGH), threonine 130, arginine 144, glutamine 223, threonine 238, and arginine 302. Residue histidine 42 is the Proton donor of the active site. 298-304 (ASTGRRR) contacts substrate. Residues arginine 304, 330–332 (KLD), and 412–414 (STG) contribute to the GTP site.

Belongs to the adenylosuccinate synthetase family. As to quaternary structure, homodimer. The cofactor is Mg(2+).

The protein resides in the cytoplasm. The enzyme catalyses IMP + L-aspartate + GTP = N(6)-(1,2-dicarboxyethyl)-AMP + GDP + phosphate + 2 H(+). Its pathway is purine metabolism; AMP biosynthesis via de novo pathway; AMP from IMP: step 1/2. Functionally, plays an important role in the de novo pathway of purine nucleotide biosynthesis. Catalyzes the first committed step in the biosynthesis of AMP from IMP. The sequence is that of Adenylosuccinate synthetase from Dichelobacter nodosus (strain VCS1703A).